We begin with the raw amino-acid sequence, 246 residues long: Probable transcriptional regulatory protein CLL_A1008 (246 aa).

It belongs to the TACO1 family.

It is found in the cytoplasm. In Clostridium botulinum (strain Eklund 17B / Type B), this protein is Probable transcriptional regulatory protein CLL_A1008.